Here is a 283-residue protein sequence, read N- to C-terminus: Plasma membrane ascorbate-dependent reductase CYBRD1 (283 aa).

The Cytoplasmic segment spans residues 1–5 (MEGYK). Residues 6-30 (SFLVFLVSSLLLGFLGVIFTLVWVL) traverse the membrane as a helical segment. In terms of domain architecture, Cytochrome b561 spans 13–218 (SSLLLGFLGV…FGGLVVWMVT (206 aa)). Residues 31 to 45 (HWREGLGWDGGAAEF) are Extracellular-facing. A helical transmembrane segment spans residues 46 to 67 (NWHPVLVTSGFIFIQGIAIIVY). Heme b is bound by residues His48, Arg68, and Lys77. The Cytoplasmic portion of the chain corresponds to 68–76 (RLPWTWNCS). Residues Lys77 and Lys81 each coordinate L-ascorbate. Residues 77 to 103 (KLLMKFIHAGLHLTAFVFTIVALVAVF) traverse the membrane as a helical segment. His84 contacts heme b. The Extracellular portion of the chain corresponds to 104-116 (DFHNAKNIPNMYS). Fe(3+) is bound at residue His106. Heme b contacts are provided by residues 113–116 (NMYS) and His118. The chain crosses the membrane as a helical span at residues 117-142 (LHSWIGLTVVILYALQLVLGVSIYLL). Topologically, residues 143–149 (PFARDTL) are cytoplasmic. Arg150 lines the L-ascorbate pocket. Residues 150–177 (RAALMPVHVYSGLLIFGTVIATALMGIT) form a helical membrane-spanning segment. Residues His157 and Glu178 each coordinate heme b. Residues 178 to 195 (EKLIFSLKEPPYSKMPPE) lie on the Extracellular side of the membrane. Residues 196–220 (AIFVNTFGLIILVFGGLVVWMVTTP) form a helical membrane-spanning segment. The Cytoplasmic segment spans residues 221–283 (AWKRPREQEI…LDDAGQRSTM (63 aa)). Lys223 is a binding site for heme b. Residues 234–263 (NPTVSSPDGTEEGSTITDCSNTEKSDVELN) form a disordered region. Positions 235–253 (PTVSSPDGTEEGSTITDCS) are enriched in polar residues. Residues 254–263 (NTEKSDVELN) are compositionally biased toward basic and acidic residues.

Homodimer. Requires heme b as cofactor.

It localises to the cell membrane. It is found in the apical cell membrane. The catalysed reaction is Fe(3+)(out) + L-ascorbate(in) = monodehydro-L-ascorbate radical(in) + Fe(2+)(out) + H(+). It catalyses the reaction Cu(2+)(out) + L-ascorbate(in) = Cu(+)(out) + monodehydro-L-ascorbate radical(in) + H(+). It carries out the reaction monodehydro-L-ascorbate radical(out) + L-ascorbate(in) = monodehydro-L-ascorbate radical(in) + L-ascorbate(out). In terms of biological role, plasma membrane reductase that uses cytoplasmic ascorbate as an electron donor to reduce extracellular Fe(3+) into Fe(2+). It is also able to reduce extracellular monodehydro-L-ascorbate and may be involved in extracellular ascorbate regeneration. May also function as a cupric transmembrane reductase. The chain is Plasma membrane ascorbate-dependent reductase CYBRD1 (cybrd1) from Xenopus tropicalis (Western clawed frog).